An 82-amino-acid chain; its full sequence is uncharacterized protein (82 aa).

A disordered region spans residues 60-82; that stretch reads YKRRRPDHMMKRNSPSYTGDHKT.

This is an uncharacterized protein from Saccharomyces cerevisiae (strain ATCC 204508 / S288c) (Baker's yeast).